The sequence spans 142 residues: Large ribosomal subunit protein bL17 (142 aa).

It belongs to the bacterial ribosomal protein bL17 family. Part of the 50S ribosomal subunit. Contacts protein L32.

This is Large ribosomal subunit protein bL17 from Bartonella henselae (strain ATCC 49882 / DSM 28221 / CCUG 30454 / Houston 1) (Rochalimaea henselae).